The chain runs to 3083 residues: Genome polyprotein (3083 aa).

Positions 173–313 (VVRSASVNNL…VFFYDDVDHY (141 aa)) constitute a Peptidase S30 domain. Catalysis depends on for P1 proteinase activity residues His226, Glu235, and Ser267. The short motif at 365–368 (KLSC) is the Involved in interaction with stylet and aphid transmission element. Residues 621 to 623 (PTK) carry the Involved in virions binding and aphid transmission motif. One can recognise a Peptidase C6 domain in the interval 647 to 769 (MYIAKEGYCY…QSEMKHYRVG (123 aa)). Catalysis depends on for helper component proteinase activity residues Cys655 and His728. Residues 1239 to 1391 (EIASSNEGEF…TQFAVKVKTE (153 aa)) enclose the Helicase ATP-binding domain. 1252 to 1259 (GAVGSGKS) contributes to the ATP binding site. Positions 1341–1344 (DECH) match the DECH box motif. The Helicase C-terminal domain maps to 1410-1569 (DMIQHGNNIL…GLSVTTHGVS (160 aa)). The Nuclear localization signal signature appears at 1894–1903 (KRGKVKGNNS). Tyr1918 carries the post-translational modification O-(5'-phospho-RNA)-tyrosine. The Peptidase C4 domain maps to 2045–2263 (SKSIYKGVRD…IAWGLLNLVD (219 aa)). Residues His2090, Asp2125, and Cys2195 each act as for nuclear inclusion protein A activity in the active site. The RdRp catalytic domain occupies 2529-2653 (WLYCHADGSQ…AVKDEDSGLL (125 aa)). Positions 2805–2854 (SDTQTKEADAGAAKRDKDEEKEKKKDVASSSANEKTMTATAKDKDVNAGS) are disordered. The span at 2808-2831 (QTKEADAGAAKRDKDEEKEKKKDV) shows a compositional bias: basic and acidic residues. Polar residues predominate over residues 2832 to 2843 (ASSSANEKTMTA).

The protein belongs to the potyviridae genome polyprotein family. As to quaternary structure, interacts with host eIF4E protein (via cap-binding region); this interaction mediates the translation of the VPg-viral RNA conjugates. Part of a complex that comprises VPg, RNA, host EIF4E and EIF4G; this interaction mediates the translation of the VPg-viral RNA conjugates. Post-translationally, VPg is uridylylated by the polymerase and is covalently attached to the 5'-end of the genomic RNA. This uridylylated form acts as a nucleotide-peptide primer for the polymerase. In terms of processing, potyviral RNA is expressed as two polyproteins which undergo post-translational proteolytic processing. Genome polyprotein is processed by NIa-pro, P1 and HC-pro proteinases resulting in the production of at least ten individual proteins. P3N-PIPO polyprotein is cleaved by P1 and HC-pro proteinases resulting in the production of three individual proteins. The P1 proteinase and the HC-pro cleave only their respective C-termini autocatalytically. 6K1 is essential for proper proteolytic separation of P3 from CI.

The protein localises to the host cytoplasmic vesicle. It localises to the host nucleus. The protein resides in the virion. The enzyme catalyses RNA(n) + a ribonucleoside 5'-triphosphate = RNA(n+1) + diphosphate. The catalysed reaction is Hydrolyzes glutaminyl bonds, and activity is further restricted by preferences for the amino acids in P6 - P1' that vary with the species of potyvirus, e.g. Glu-Xaa-Xaa-Tyr-Xaa-Gln-|-(Ser or Gly) for the enzyme from tobacco etch virus. The natural substrate is the viral polyprotein, but other proteins and oligopeptides containing the appropriate consensus sequence are also cleaved.. It catalyses the reaction Hydrolyzes a Gly-|-Gly bond at its own C-terminus, commonly in the sequence -Tyr-Xaa-Val-Gly-|-Gly, in the processing of the potyviral polyprotein.. Required for aphid transmission and also has proteolytic activity. Only cleaves a Gly-Gly dipeptide at its own C-terminus. Interacts with virions and aphid stylets. Acts as a suppressor of RNA-mediated gene silencing, also known as post-transcriptional gene silencing (PTGS), a mechanism of plant viral defense that limits the accumulation of viral RNAs. May have RNA-binding activity. Its function is as follows. Has helicase activity. It may be involved in replication. In terms of biological role, indispensable for virus replication. Functionally, mediates the cap-independent, EIF4E-dependent translation of viral genomic RNAs. Binds to the cap-binding site of host EIF4E and thus interferes with the host EIF4E-dependent mRNA export and translation. VPg-RNA directly binds EIF4E and is a template for transcription. Also forms trimeric complexes with EIF4E-EIF4G, which are templates for translation. Has RNA-binding and proteolytic activities. Its function is as follows. An RNA-dependent RNA polymerase that plays an essential role in the virus replication. In terms of biological role, involved in aphid transmission, cell-to-cell and systemis movement, encapsidation of the viral RNA and in the regulation of viral RNA amplification. The protein is Genome polyprotein of Zucchini yellow mosaic virus (strain Reunion Island) (ZYMV).